We begin with the raw amino-acid sequence, 346 residues long: Holliday junction branch migration complex subunit RuvB (346 aa).

The tract at residues 1–182 (MSEPARLISP…FGIPVRLSFY (182 aa)) is large ATPase domain (RuvB-L). Residues leucine 21, arginine 22, glycine 63, lysine 66, threonine 67, threonine 68, 129–131 (EDF), arginine 172, tyrosine 182, and arginine 219 each bind ATP. Residue threonine 67 coordinates Mg(2+). Residues 183–253 (TVEELELIVR…IADEALTRLL (71 aa)) are small ATPAse domain (RuvB-S). Residues 256 to 346 (NVGFDQLDKR…AQFRLFQEDN (91 aa)) form a head domain (RuvB-H) region. DNA is bound by residues arginine 292, arginine 311, and arginine 316.

This sequence belongs to the RuvB family. Homohexamer. Forms an RuvA(8)-RuvB(12)-Holliday junction (HJ) complex. HJ DNA is sandwiched between 2 RuvA tetramers; dsDNA enters through RuvA and exits via RuvB. An RuvB hexamer assembles on each DNA strand where it exits the tetramer. Each RuvB hexamer is contacted by two RuvA subunits (via domain III) on 2 adjacent RuvB subunits; this complex drives branch migration. In the full resolvosome a probable DNA-RuvA(4)-RuvB(12)-RuvC(2) complex forms which resolves the HJ.

It localises to the cytoplasm. The catalysed reaction is ATP + H2O = ADP + phosphate + H(+). In terms of biological role, the RuvA-RuvB-RuvC complex processes Holliday junction (HJ) DNA during genetic recombination and DNA repair, while the RuvA-RuvB complex plays an important role in the rescue of blocked DNA replication forks via replication fork reversal (RFR). RuvA specifically binds to HJ cruciform DNA, conferring on it an open structure. The RuvB hexamer acts as an ATP-dependent pump, pulling dsDNA into and through the RuvAB complex. RuvB forms 2 homohexamers on either side of HJ DNA bound by 1 or 2 RuvA tetramers; 4 subunits per hexamer contact DNA at a time. Coordinated motions by a converter formed by DNA-disengaged RuvB subunits stimulates ATP hydrolysis and nucleotide exchange. Immobilization of the converter enables RuvB to convert the ATP-contained energy into a lever motion, pulling 2 nucleotides of DNA out of the RuvA tetramer per ATP hydrolyzed, thus driving DNA branch migration. The RuvB motors rotate together with the DNA substrate, which together with the progressing nucleotide cycle form the mechanistic basis for DNA recombination by continuous HJ branch migration. Branch migration allows RuvC to scan DNA until it finds its consensus sequence, where it cleaves and resolves cruciform DNA. The protein is Holliday junction branch migration complex subunit RuvB of Rhizobium johnstonii (strain DSM 114642 / LMG 32736 / 3841) (Rhizobium leguminosarum bv. viciae).